A 245-amino-acid polypeptide reads, in one-letter code: MEGWQRAFVLHGRPYSETSLLLDLFSESDGRVRVLAKGARARRSSLKGCLQPFTPLLVRWSGRGEVKTLRSAEPVSLALPLTGSMLYSGLYVNELLARVLEHETNYSALFFDYLHCLQHLAAQDASPEPALRRFELALLGYLGYGVDFLHCAGSGEPVADTMTYQYREERGFTASLVVDNKSFTGHELHSLASREFPDVGTLKAAKRFTRIALKPYLGGKPLKSRELFRQFVPAANLSKPTSSDK.

Belongs to the RecO family.

Involved in DNA repair and RecF pathway recombination. The polypeptide is DNA repair protein RecO (Pectobacterium atrosepticum (strain SCRI 1043 / ATCC BAA-672) (Erwinia carotovora subsp. atroseptica)).